A 304-amino-acid chain; its full sequence is Energy-coupling factor transporter ATP-binding protein EcfA2 (304 aa).

The ABC transporter domain maps to 3–261 (IIVKNISYIY…EKFLVENKLK (259 aa)). 40 to 47 (GSTGSGKT) is a binding site for ATP.

This sequence belongs to the ABC transporter superfamily. Energy-coupling factor EcfA family. As to quaternary structure, forms a stable energy-coupling factor (ECF) transporter complex composed of 2 membrane-embedded substrate-binding proteins (S component), 2 ATP-binding proteins (A component) and 2 transmembrane proteins (T component).

The protein resides in the cell membrane. Its function is as follows. ATP-binding (A) component of a common energy-coupling factor (ECF) ABC-transporter complex. Unlike classic ABC transporters this ECF transporter provides the energy necessary to transport a number of different substrates. This is Energy-coupling factor transporter ATP-binding protein EcfA2 from Mycoplasmopsis pulmonis (strain UAB CTIP) (Mycoplasma pulmonis).